Consider the following 356-residue polypeptide: D-alanine--D-alanine ligase (356 aa).

The region spanning 134–339 is the ATP-grasp domain; the sequence is KQLFEHRGLP…YPELITKLIE (206 aa). 167-222 contacts ATP; the sequence is NDKLNYPVFVKPANLGSSIGISKCSNEVELKEGIKEAFQFDRKLVIEQGVNAREIE. Mg(2+) is bound by residues Asp-293, Glu-306, and Asn-308.

The protein belongs to the D-alanine--D-alanine ligase family. The cofactor is Mg(2+). Requires Mn(2+) as cofactor.

It is found in the cytoplasm. The catalysed reaction is 2 D-alanine + ATP = D-alanyl-D-alanine + ADP + phosphate + H(+). It functions in the pathway cell wall biogenesis; peptidoglycan biosynthesis. Functionally, cell wall formation. In Staphylococcus aureus (strain MRSA252), this protein is D-alanine--D-alanine ligase.